Here is a 256-residue protein sequence, read N- to C-terminus: Small ribosomal subunit protein uS2 (256 aa).

The disordered stretch occupies residues 229 to 256 (PVDDNGDYGDFDEAIDEYADETDASESE). The span at 232 to 256 (DNGDYGDFDEAIDEYADETDASESE) shows a compositional bias: acidic residues.

It belongs to the universal ribosomal protein uS2 family.

The polypeptide is Small ribosomal subunit protein uS2 (Picosynechococcus sp. (strain ATCC 27264 / PCC 7002 / PR-6) (Agmenellum quadruplicatum)).